A 2724-amino-acid chain; its full sequence is MLNMVDQKKGINNGSSTGVINNINGKIKNEFIFMYLIAAGGFSCVYKIKKKKSNKFYALKKIKFSANESNYEKKVLLNLREIECLRKLKNHPNIVSMNDFWLEVVQTLSKSKRERRGRRKEQQREQMGDKRREKRQQQRREKRKEQNTNTKKRVLITLSDHKKKKLKHLSCPENALNISNITNNERNVLKKDNWKNLILLKNFKKEKHNYNFNHQIELNKYNIMCLWKILNQMCVCKNEKKNIESLLPEQLIKNFKNFLFEKYILAIYDDCSYLNNKNNKTFIFFNNNLGNILHYLWWSYLGKNGKEKKNDIFKLLKYVSDNIIKDNTNLYNIILEFRHSLIELSRFPSNELGNVILNMRIPPNGSCELSEYISNMAKINKLEIYRNKNTLEKFIFKINCNNFDVYKMWINFKNDIIYEGKDVYKEHRKINLKRKIIKKKDIWIKGKKEKHLKNTIGNKCIKKINIYYEKPIHVFVYKSLTYKRQKHHKLWRKHYNNKKNWKYCLNKHENSKKYILFSKICRLMKTQMNKFKREEKFEKKKKIAITNIKVNYNDFEQDISSFNIQIYNKKNKNQLINRIKEQYEQLSISLNPYKLTYENENILRYNEHNYLFGLKNDNEKENIYNAIYFLNFYIWIRREINEYAIISKKRQICQNSRNYQSKKKFYIKRHNQKTYFFENIIFYHYIIMLFLDIEKYKNKFVSLFQYNLYRKLLKISKRIVLMLHRIETNVICIFLLKHFEDYFIRKGIHIVQDKSDRSNKGDEIGIHKMVKIWKSMIAISLIFGKKMYKKKKNIFNFFIELFLNNIQINIFKKFEILYLIIYFYNYFEKSKQFDIEGIGDIIYVWLSLINLFYDDKGKCIKILSKIFAKLNKKLYYVYWGKLYIIMNWTTIVDTIFIRNVLSINREGNYYWVIIVLKMINYFVNVAYTLTRMDIFFIKVMIKFYTRIGSAAATNSVSKNSYNEIFNNIFTLNFMNYIIYNSYFENEKKNYDIYTKYAILFIYCFIIQAYYFDTLFNIRSLESNEIANNLFPGYNYSYKNILLFYERLGRVIKNSNNTKICKYMWRKFINMWSNSIVIKENIISCLTTSRHIYFNILMNFMKIYCLDNILHIKKKKKKMNTPIVLTSKNDLKKWKDCELTKNPKSVKKGILIKKKNRNNNKKYKKKLKETHFIYNIKKVLFKKLVNINIETILYEQNGQCYILVFGSVIKKKNGQIKVKDTKIVRDINIIRDYRIYFYNYLEYFYKNNAHISDNINLIYARKWPYNNKNAVKQFCPYFDKIKDGNRKDIVSLYGNKILVKQNFSKIGNKIKNKKNNLCKKKMRTQKSIYNSNYWREKKENKLLNGNVNIIKKYKSEKIKKKELENFFDNIVYSSENDDFKIIFENATNSNACSTVDLASPNELNTKRNNINKKLKFFKHKKNSKKQKNYKNHKSHKKIFFKSVNNANRFFVTNVEPNPIMSNNHQIADSNDIYNNFSIQKKYEYNHKNCGNIYNTKDCDENDSSYICFLINEHEGQVLSHRHKELYKNMLGMERGNILYRDNACKLKDDFSCLHDQCDNSMIKACGTNELIKESTKIKRENMDKINKMNEVNQHISLETLKYKCSFKKIDKNLIQNKKKIIIRKICQINKTFYFKYNKINDKKRIYFDSVLCKSERHKTYKKRNENIKVILLKTLKGESNEYVLTTYLTEIYSDNINDPFENSRKKINSNEIFYQKTFDMYCIEDEGEVYEEQKRVNKNNKKKKYINEMIKMDTIRTDFEDNFTNSYNKKCNILKMASNINNKNNSGKKERDIKRQFLITNKKKHENNIKIFYNLFKLEESNVNSNPQTNPYYETVIHDNEDNIFYCLYKYIQQQVYRYCNCDIDEYTSNCIDKNVNKWEWYGFIKENENYDKIKTEINSNSFYNCREKHNICNSYNSVYQLEFRKLGNASKEKNFEEKKKIIKIEFRKSFNNFKLPSLLCILKWDNFFKPHFIIRCDNFLHTYNIYFDFFILLMNLFHKGEGSNLYRFNSNKSIIYNPYLSHQIYMVTKYFISNVHKINNKLPIHLENDILEIYSYNRFLTIPNKCSFKNCGNDNNNYDQRSKKHYFTKCGILNTEKVKPSKKRRIGWDGQRQRKRKDIINTLNEENQNMFCKNKEKKEENYKKIDTNISQFSEKNPVSNIDNEKNKQNFIKNKKYKFNLYIRMEYCKDTIENYINRRTRINIKRNIEIINMIIMGLNYIHNNNIMHRDLKPSNIFISNNDIVKIGDFGLASYDYLDDHKINTTKEEEIQKDLIINKNCDKIFFCNKKKLFSNYNSVFPLENGQISDVHNTKGDYNESSISKSKKFAIQNKNRNLRSCKRIFQWWSTIGELNILSKNRRRLTKFKSGSNTIHIRKSTLDENIIVRHANKCHNLSFSQNREHIDRNRMKKCNIIKNHIIKSNKSEKMNISMNVFLRCTKTRRYFTDEDKSVETRKKCSKTSEEENGNICDTKKKKNDIGEKMDKNKIAAQKKKKKKENKHPIGRRSTNSSISSAIVVKRNAYCRLEIEKYFLSKSFQNCRSNKKKKYINIKTIKNKFCSASNKNFGAKWMRIYRKGLHHDDIQEKSADQTTEQMGGCNKTVASDFSSNLKNKKESINHTLGIGTKLYSAPEQLEGNKYTKSVDIFSLGLIIIDLFIKTETNMERTQILCNARERILPDLLIKKHPNVASLCKKMLSLDYKSRPTSAQLYNKIISAGDIFLPDKCP.

Over 1-24 (MLNMVDQKKGINNGSSTGVINNIN) the chain is Cytoplasmic. The chain crosses the membrane as a helical span at residues 25-45 (GKIKNEFIFMYLIAAGGFSCV). Over 46–673 (YKIKKKKSNK…KFYIKRHNQK (628 aa)) the chain is Extracellular. Positions 112–153 (KRERRGRRKEQQREQMGDKRREKRQQQRREKRKEQNTNTKKR) are disordered. Basic and acidic residues predominate over residues 120 to 146 (KEQQREQMGDKRREKRQQQRREKRKEQ). Residues 674–694 (TYFFENIIFYHYIIMLFLDIE) form a helical membrane-spanning segment. Residues 695–718 (KYKNKFVSLFQYNLYRKLLKISKR) are Cytoplasmic-facing. The chain crosses the membrane as a helical span at residues 719–739 (IVLMLHRIETNVICIFLLKHF). Residues 740-800 (EDYFIRKGIH…KKNIFNFFIE (61 aa)) lie on the Extracellular side of the membrane. A helical membrane pass occupies residues 801 to 821 (LFLNNIQINIFKKFEILYLII). The Cytoplasmic portion of the chain corresponds to 822–832 (YFYNYFEKSKQ). Residues 833–853 (FDIEGIGDIIYVWLSLINLFY) form a helical membrane-spanning segment. Residues 854–876 (DDKGKCIKILSKIFAKLNKKLYY) lie on the Extracellular side of the membrane. The chain crosses the membrane as a helical span at residues 877–897 (VYWGKLYIIMNWTTIVDTIFI). Residues 898-908 (RNVLSINREGN) lie on the Cytoplasmic side of the membrane. The helical transmembrane segment at 909–929 (YYWVIIVLKMINYFVNVAYTL) threads the bilayer. Topologically, residues 930–996 (TRMDIFFIKV…KKNYDIYTKY (67 aa)) are extracellular. The chain crosses the membrane as a helical span at residues 997 to 1017 (AILFIYCFIIQAYYFDTLFNI). Residues 1018–2724 (RSLESNEIAN…GDIFLPDKCP (1707 aa)) are Cytoplasmic-facing. K2029 contacts ATP. A Protein kinase domain is found at 2084–2719 (KHYFTKCGIL…KIISAGDIFL (636 aa)). Residues 2120–2155 (INTLNEENQNMFCKNKEKKEENYKKIDTNISQFSEK) are a coiled coil. D2229 functions as the Proton acceptor in the catalytic mechanism. The interval 2479 to 2507 (EKMDKNKIAAQKKKKKKENKHPIGRRSTN) is disordered. The span at 2488–2502 (AQKKKKKKENKHPIG) shows a compositional bias: basic residues.

This sequence belongs to the protein kinase superfamily. Ser/Thr protein kinase family. GCN2 subfamily. Post-translationally, auto-phosphorylated.

The protein resides in the membrane. It carries out the reaction L-seryl-[protein] + ATP = O-phospho-L-seryl-[protein] + ADP + H(+). The catalysed reaction is L-threonyl-[protein] + ATP = O-phospho-L-threonyl-[protein] + ADP + H(+). Phosphorylates translation factor eIF2alpha in salivary gland sporozoites during dormancy, which leads to an inhibition of protein translation and accumulation of stalled mRNAs into granules. The protein is Eukaryotic translation initiation factor 2-alpha kinase 2 of Plasmodium berghei (strain Anka).